Reading from the N-terminus, the 185-residue chain is Ribosome-recycling factor (185 aa).

Belongs to the RRF family.

It is found in the cytoplasm. Its function is as follows. Responsible for the release of ribosomes from messenger RNA at the termination of protein biosynthesis. May increase the efficiency of translation by recycling ribosomes from one round of translation to another. In Wolbachia sp. subsp. Brugia malayi (strain TRS), this protein is Ribosome-recycling factor.